Here is a 155-residue protein sequence, read N- to C-terminus: Ribosome maturation factor RimP (155 aa).

The protein belongs to the RimP family.

It is found in the cytoplasm. Its function is as follows. Required for maturation of 30S ribosomal subunits. The chain is Ribosome maturation factor RimP from Prochlorococcus marinus (strain MIT 9515).